A 178-amino-acid polypeptide reads, in one-letter code: Signal peptidase complex subunit 2 (178 aa).

Topologically, residues 1–37 (MSSAKPINVYSIPELNQALDEALPSVFARLNYERSYA) are cytoplasmic. A helical transmembrane segment spans residues 38-58 (LLDAKLYIGYSIAVVAGLSFF). Over 59-67 (LDKKFERDQ) the chain is Lumenal. The helical transmembrane segment at 68-88 (IVTYQKLLVGAYFVLSLLFWY) threads the bilayer. Residues 89 to 178 (FSRFIEKGTV…HNVLDTKKNE (90 aa)) are Cytoplasmic-facing.

Belongs to the SPCS2 family. Component of the signal peptidase complex (SPC) composed of a catalytic subunit SEC11 and three accessory subunits SPC1, SPC2 and SPC3. The complex induces a local thinning of the ER membrane which is used to measure the length of the signal peptide (SP) h-region of protein substrates. This ensures the selectivity of the complex towards h-regions shorter than 18-20 amino acids. SPC associates with the translocon complex. Interacts with SBH1 and SEB2/SBH2.

It is found in the endoplasmic reticulum membrane. Its function is as follows. Component of the signal peptidase complex (SPC) which catalyzes the cleavage of N-terminal signal sequences from nascent proteins as they are translocated into the lumen of the endoplasmic reticulum. Enhances the enzymatic activity of SPC and facilitates the interactions between different components of the translocation site. The sequence is that of Signal peptidase complex subunit 2 (SPC2) from Saccharomyces cerevisiae (strain ATCC 204508 / S288c) (Baker's yeast).